Consider the following 347-residue polypeptide: MTAPSQVLKIRRPDDWHVHLRDGDMLKTVVPYTSEIYGRAIVMPNLAPPVTTVDAAIAYRQRILDAVPAGHDFTPLMTCYLTDTLDPDELERGFREGVFTAAKLYPANATTNSSHGVTSVDTIMPVLERMEKLGMPLLVHGEVTHADIDIFDREARFIETVMEPLRQRLTALKVVFEHITTKDAAEYVRDGNELLAATITPQHLMFNRNHMLVGGIRPHLYCLPILKRNVHQQALRELVASGFSRAFLGTDSAPHARHRKETSCGCAGCFNAPTALGSYATVFEEMNALAHFEAFCSLNGPRFYGLSVNETYVELVREEQLVPESITLADDSLVPFLGGERVRWSVK.

2 residues coordinate Zn(2+): His17 and His19. Residues His19 to Arg21 and Asn45 each bind substrate. Residues Lys103, His140, and His178 each contribute to the Zn(2+) site. The residue at position 103 (Lys103) is an N6-carboxylysine. A substrate-binding site is contributed by His140. Substrate is bound at residue Leu223. A Zn(2+)-binding site is contributed by Asp251. Asp251 is a catalytic residue. Substrate is bound by residues His255 and Ala267.

This sequence belongs to the metallo-dependent hydrolases superfamily. DHOase family. Class II DHOase subfamily. In terms of assembly, homodimer. Requires Zn(2+) as cofactor.

It carries out the reaction (S)-dihydroorotate + H2O = N-carbamoyl-L-aspartate + H(+). It functions in the pathway pyrimidine metabolism; UMP biosynthesis via de novo pathway; (S)-dihydroorotate from bicarbonate: step 3/3. Catalyzes the reversible cyclization of carbamoyl aspartate to dihydroorotate. This chain is Dihydroorotase, found in Citrobacter koseri (strain ATCC BAA-895 / CDC 4225-83 / SGSC4696).